The primary structure comprises 180 residues: Large ribosomal subunit protein uL5 (180 aa).

The protein belongs to the universal ribosomal protein uL5 family. Forms a bridge to the 30S subunit in the 70S ribosome. Part of the 50S ribosomal subunit; part of the 5S rRNA/L5/L18/L25 (CTC) subcomplex. Is known to contact the 5S rRNA, 23S rRNA and the P site tRNA.

Functionally, this is one of the proteins that bind and probably mediate the attachment of the 5S RNA into the large ribosomal subunit, where it forms part of the central protuberance. In the 70S ribosome it contacts protein S13 of the 30S subunit (bridge B1b), connecting the 2 subunits; this bridge is implicated in subunit movement. Contacts the P site tRNA; the 5S rRNA and some of its associated proteins might help stabilize positioning of ribosome-bound tRNAs. This Deinococcus radiodurans (strain ATCC 13939 / DSM 20539 / JCM 16871 / CCUG 27074 / LMG 4051 / NBRC 15346 / NCIMB 9279 / VKM B-1422 / R1) protein is Large ribosomal subunit protein uL5 (rplE).